The following is a 359-amino-acid chain: Membrane-bound lytic murein transglycosylase C (359 aa).

The first 16 residues, 1–16, serve as a signal peptide directing secretion; sequence MKKYLALALIAPLLIS. Cys-17 carries N-palmitoyl cysteine lipidation. Cys-17 is lipidated: S-diacylglycerol cysteine.

The protein belongs to the transglycosylase Slt family.

The protein resides in the cell outer membrane. It catalyses the reaction Exolytic cleavage of the (1-&gt;4)-beta-glycosidic linkage between N-acetylmuramic acid (MurNAc) and N-acetylglucosamine (GlcNAc) residues in peptidoglycan, from either the reducing or the non-reducing ends of the peptidoglycan chains, with concomitant formation of a 1,6-anhydrobond in the MurNAc residue.. Functionally, murein-degrading enzyme. May play a role in recycling of muropeptides during cell elongation and/or cell division. The polypeptide is Membrane-bound lytic murein transglycosylase C (Escherichia coli O8 (strain IAI1)).